The following is a 234-amino-acid chain: Phosphoribosylaminoimidazole-succinocarboxamide synthase (234 aa).

It belongs to the SAICAR synthetase family.

The catalysed reaction is 5-amino-1-(5-phospho-D-ribosyl)imidazole-4-carboxylate + L-aspartate + ATP = (2S)-2-[5-amino-1-(5-phospho-beta-D-ribosyl)imidazole-4-carboxamido]succinate + ADP + phosphate + 2 H(+). It participates in purine metabolism; IMP biosynthesis via de novo pathway; 5-amino-1-(5-phospho-D-ribosyl)imidazole-4-carboxamide from 5-amino-1-(5-phospho-D-ribosyl)imidazole-4-carboxylate: step 1/2. This Clostridium botulinum (strain Okra / Type B1) protein is Phosphoribosylaminoimidazole-succinocarboxamide synthase.